The primary structure comprises 347 residues: MPLLSCSQTFRLPPLHETFSVFPDNGLNPNYNACRAQSRAWISKYNVQVCGPKMRAFMDNCNFELSNAYVYPYAQPAGLRATMDLANILWLYDEYTDMQTGEDAAKAAVTVSKTLLNPEYDDDTWICHMMRDFYVNHIQKCRPNVAHRFIENFCRYTEVVGTEAKLREKNEVLDIPGYVALRREISAVRTCFDLVEYCLDLDFPDYVHKDPIFVIGYNAAMDLVFWANDLFSYNSEQAKGHAAANVVTVIMTSKKMNLQSTVDFIAGFCEALTFQLLDAKRALSLHEDPTFSRDAVRCLEAFGDWVRGNDAWSFATTRYFGPENKIVKETRIVKLKAPVEESVALKE.

Mg(2+) contacts are provided by Asp93, Asn228, Ser232, and Glu236. The DDXXD motif signature appears at 93 to 97 (DEYTD). (2E,6E)-farnesyl diphosphate is bound by residues Arg318 and Tyr319.

Belongs to the terpene synthase family. Mg(2+) serves as cofactor.

The enzyme catalyses (2E,6E)-farnesyl diphosphate = viridiflorene + diphosphate. In terms of biological role, terpene cyclase that catalyzes the cyclization of farnesyl diphosphate (FPP) to viridiflorene and viridiflorol. In Sphaerobolus stellatus (strain SS14), this protein is Sesquiterpene synthase M422DRAFT_47084.